The sequence spans 42 residues: Putative protein RNF216-like (42 aa).

The polypeptide is Putative protein RNF216-like (RNF216P1) (Homo sapiens (Human)).